A 486-amino-acid polypeptide reads, in one-letter code: MSNDTSAQPAQSSLSFTQGLLVGQLSVVLLIGAFIKFFIFGEASPSSSRSQTRRTSPHKRSYSISGARDLGSRSLKEKPSSNVLRPVPSSSTNTRSILRKTYYSANPTNFTSKHGRHRPHHSTHQPESLDWFNVLIAQTIAQYRQTAYILKDSPTSSILESLATTLNNPEKKPSFIDDITVTDISLGEEFPIFSNCRVIAIDDPSSDGGRLQALMDVDLSDDNLSLAIETNLVLNYPKPYSAILPVALSVSVVRFSGTLCISFVPGTTQTSTHLATSPSNIDPTLQTNDYSGANRRGNRRQERTDTEQATQANNAGTTGIPKTSLAFSFLPDYRLDLSVRSLIGSRSRLQDVPKVAQLVEARVQAWFEERVVEPRVQVVALPGIWPRMGRTGVRGQEEQQEVGSSGNAGVSTANVSMLGARDAGAEGSHATRDADMEGLRYRRNASPGDETSGVRYSPQNQDSREQACRDDPFRIPGSLPDVVPVT.

At 1-19 (MSNDTSAQPAQSSLSFTQG) the chain is on the lumenal side. A helical membrane pass occupies residues 20–40 (LLVGQLSVVLLIGAFIKFFIF). Over 41 to 486 (GEASPSSSRS…GSLPDVVPVT (446 aa)) the chain is Cytoplasmic. Disordered regions lie at residues 45–98 (PSSS…RSIL), 269–318 (QTST…AGTT), 393–412 (VRGQ…GVST), and 420–486 (ARDA…VPVT). Positions 51–61 (QTRRTSPHKRS) are enriched in basic residues. Over residues 70-79 (LGSRSLKEKP) the composition is skewed to basic and acidic residues. Polar residues-rich tracts occupy residues 80–96 (SSNV…NTRS), 269–291 (QTST…NDYS), 307–318 (EQATQANNAGTT), and 401–412 (EVGSSGNAGVST). The SMP-LTD domain occupies 125–382 (QPESLDWFNV…EPRVQVVALP (258 aa)). Composition is skewed to basic and acidic residues over residues 429–440 (HATRDADMEGLR) and 462–473 (DSREQACRDDPF).

Belongs to the MMM1 family. Homodimer. Component of the ER-mitochondria encounter structure (ERMES) or MDM complex, composed of MMM1, MDM10, MDM12 and MDM34. An MMM1 homodimer associates with one molecule of MDM12 on each side in a pairwise head-to-tail manner, and the SMP-LTD domains of MMM1 and MDM12 generate a continuous hydrophobic tunnel for phospholipid trafficking.

Its subcellular location is the endoplasmic reticulum membrane. Functionally, component of the ERMES/MDM complex, which serves as a molecular tether to connect the endoplasmic reticulum (ER) and mitochondria. Components of this complex are involved in the control of mitochondrial shape and protein biogenesis, and function in nonvesicular lipid trafficking between the ER and mitochondria. The MDM12-MMM1 subcomplex functions in the major beta-barrel assembly pathway that is responsible for biogenesis of all outer membrane beta-barrel proteins, and acts in a late step after the SAM complex. The MDM10-MDM12-MMM1 subcomplex further acts in the TOM40-specific pathway after the action of the MDM12-MMM1 complex. Essential for establishing and maintaining the structure of mitochondria and maintenance of mtDNA nucleoids. This is Maintenance of mitochondrial morphology protein 1 from Coccidioides immitis (strain RS) (Valley fever fungus).